We begin with the raw amino-acid sequence, 654 residues long: tRNA 5-methylaminomethyl-2-thiouridine biosynthesis bifunctional protein MnmC (654 aa).

Residues 1 to 236 form a tRNA (mnm(5)s(2)U34)-methyltransferase region; the sequence is MSTLLQHAQI…KWEVMSGAYV (236 aa). An FAD-dependent cmnm(5)s(2)U34 oxidoreductase region spans residues 262–654; it reads IGAGLAGSTT…FALRRLIRGK (393 aa).

In the N-terminal section; belongs to the methyltransferase superfamily. tRNA (mnm(5)s(2)U34)-methyltransferase family. This sequence in the C-terminal section; belongs to the DAO family. It depends on FAD as a cofactor.

The protein localises to the cytoplasm. The enzyme catalyses 5-aminomethyl-2-thiouridine(34) in tRNA + S-adenosyl-L-methionine = 5-methylaminomethyl-2-thiouridine(34) in tRNA + S-adenosyl-L-homocysteine + H(+). In terms of biological role, catalyzes the last two steps in the biosynthesis of 5-methylaminomethyl-2-thiouridine (mnm(5)s(2)U) at the wobble position (U34) in tRNA. Catalyzes the FAD-dependent demodification of cmnm(5)s(2)U34 to nm(5)s(2)U34, followed by the transfer of a methyl group from S-adenosyl-L-methionine to nm(5)s(2)U34, to form mnm(5)s(2)U34. This chain is tRNA 5-methylaminomethyl-2-thiouridine biosynthesis bifunctional protein MnmC, found in Pseudomonas putida (strain GB-1).